We begin with the raw amino-acid sequence, 1040 residues long: Multidrug resistance protein MdtB (1040 aa).

12 helical membrane passes run 16–36, 347–367, 369–389, 396–416, 440–460, 472–492, 537–557, 863–883, 888–908, 911–931, 968–988, and 998–1018; these read FIMR…AGII, LMMA…NIPA, IIPG…MVFL, LTLM…IVVI, IGFT…PLLF, FAIT…TLTP, WLTL…WVFI, LGST…VLGI, FIHP…ALLA, IAGS…IGIV, ILMT…STGV, and IGMV…TPVI.

Belongs to the resistance-nodulation-cell division (RND) (TC 2.A.6) family. MdtB subfamily. As to quaternary structure, part of a tripartite efflux system composed of MdtA, MdtB and MdtC. MdtB forms a heteromultimer with MdtC.

The protein localises to the cell inner membrane. The chain is Multidrug resistance protein MdtB from Shigella boydii serotype 4 (strain Sb227).